Reading from the N-terminus, the 712-residue chain is Ferric reductase transmembrane component 6 (712 aa).

An N-terminal signal peptide occupies residues 1–17; it reads MHRTLLFLTWLISLTKA. Residues 18–167 are Vacuolar-facing; sequence FNIKLPHTEK…HAHAYNLDIS (150 aa). Asn89, Asn112, and Asn124 each carry an N-linked (GlcNAc...) asparagine glycan. The chain crosses the membrane as a helical span at residues 168–188; that stretch reads SVYGAYLTYYFVIVGIIAVFF. At 189–244 the chain is on the cytoplasmic side; that stretch reads HMSHYNGLNRALFASRFVNYIRGHFVLPTFLVDKHANHFKFLNVEVFTGLMPNSLE. The helical transmembrane segment at 245–265 threads the bilayer; sequence AWIIFGYTLANIIFLSISYII. Topologically, residues 266–287 are vacuolar; the sequence is DPYNLIFNSHLSQFTRLLADRS. In terms of domain architecture, Ferric oxidoreductase spans 287–411; sequence SGILAFTQFP…YCCWQHVKIF (125 aa). A helical membrane pass occupies residues 288-308; it reads GILAFTQFPLIIIFTARNSFL. Topologically, residues 309–328 are cytoplasmic; that stretch reads EFLTGVKFNSFISFHKWIGR. The heme site is built by His323 and His337. The helical transmembrane segment at 329 to 349 threads the bilayer; sequence IMVLNATIHSLSYSLFAIINH. Residues 350–360 are Vacuolar-facing; sequence AFKISNKQLYW. The helical transmembrane segment at 361–381 threads the bilayer; that stretch reads KFGIASITVLCVLLVLSLGIV. Over 382 to 387 the chain is Cytoplasmic; the sequence is RKRHYE. A helical membrane pass occupies residues 388 to 408; it reads FFLYTHIILALLFFYCCWQHV. 2 residues coordinate heme: His393 and His407. The Vacuolar segment spans residues 409–416; it reads KIFNGWKE. An FAD-binding FR-type domain is found at 412-546; the sequence is NGWKEWIVVS…EGPYGPSNLH (135 aa). Residues 417 to 437 form a helical membrane-spanning segment; the sequence is WIVVSLLIWGLEKLFRIWNIL. Residues 438–712 lie on the Cytoplasmic side of the membrane; that stretch reads QFRFPKATLI…IEYFEEYQCW (275 aa). 493-499 provides a ligand contact to FAD; that stretch reads HPFTIID. Residues 538–541 and 678–679 contribute to the NADP(+) site; these read GPYG and CG.

The protein belongs to the ferric reductase (FRE) family. It depends on FAD as a cofactor.

The protein localises to the vacuole membrane. It catalyses the reaction 2 a Fe(II)-siderophore + NADP(+) + H(+) = 2 a Fe(III)-siderophore + NADPH. Functionally, metalloreductase responsible for reducing vacuolar iron and copper prior to transport into the cytosol. Catalyzes the reduction of Fe(3+) to Fe(2+) and Cu(2+) to Cu(+), respectively, which can then be transported by the respective vacuolar efflux systems to the cytosol. This chain is Ferric reductase transmembrane component 6 (FRE6), found in Saccharomyces cerevisiae (strain ATCC 204508 / S288c) (Baker's yeast).